The sequence spans 298 residues: Protein BZR1 homolog 1 (298 aa).

4 disordered regions span residues 1 to 25, 71 to 129, 153 to 175, and 190 to 217; these read MTSGAAAAGRTPTWKERENNKRRER, GTTY…SPSR, VSSSAPVTPPLSSPTASRPPKIR, and AVSAPASPTRGRRLEHPDTIPECDESDV. A required for DNA-binding region spans residues 10–91; that stretch reads RTPTWKEREN…PSSAGGASVG (82 aa). The span at 96–128 shows a compositional bias: low complexity; the sequence is SSTQLLSAPSSSFPSPVPSYHASPASSSFPSPS. A Phosphoserine modification is found at Ser156. Residues 204-224 form a PEST-like region; sequence EHPDTIPECDESDVSTVDSGR.

Belongs to the BZR/LAT61 family. As to quaternary structure, interacts with GF14C. Interacts with PUB24. Interacts with SMOS1. Phosphorylated on serine and threonine residues by GSK2. Dephosphorylated during response to brassinosteroid. Post-translationally, ubiquitinated by PUB24. Ubiquitination leads to its subsequent degradation by the 26S proteasome, thus reducing sensitivity to brassinosteroid signaling.

It localises to the nucleus. Its subcellular location is the cytoplasm. Positive brassinosteroid-signaling protein. Mediates downstream brassinosteroid-regulated growth response and feedback inhibition of brassinosteroid (BR) biosynthetic genes. May act as transcriptional repressor by binding the brassinosteroid-response element (BREE) (5'-CGTG(T/C)G-3') in the promoter of DLT (AC Q9LWU9), another positive regulator of BR signaling. Acts as a transcriptional repressor of LIC, a negative regulator of BR signaling, by binding to the BRRE element of its promoter. BZR1 and LIC play opposite roles in BR signaling and regulation of leaf bending. The chain is Protein BZR1 homolog 1 from Oryza sativa subsp. japonica (Rice).